The following is a 414-amino-acid chain: Putative polyketide beta-ketoacyl synthase 2 (414 aa).

In terms of domain architecture, Ketosynthase family 3 (KS3) spans 4–407; that stretch reads PRRAVVTGLG…GNNSALVLRR (404 aa).

It belongs to the thiolase-like superfamily. Beta-ketoacyl-ACP synthases family.

Its function is as follows. Involved in developmentally regulated synthesis of a compound biosynthetically related to polyketide antibiotics which is essential for spore color in Streptomyces halstedii. This chain is Putative polyketide beta-ketoacyl synthase 2 (sch2), found in Streptomyces halstedii.